Here is a 307-residue protein sequence, read N- to C-terminus: Probable E3 SUMO-protein ligase RNF212 (307 aa).

The RING-type zinc-finger motif lies at 7–46 (CNRCFQSPHRKSSFSLTSCGHVYCHSCLLKGTKNECVICQ). Residues 91–124 (RRRLVAFYQEKISQLEESLRKSVLQIKQLQSMRS) are a coiled coil. Residues 164–291 (LTPPARKPEM…KMSPFLPSTP (128 aa)) are disordered. Polar residues-rich tracts occupy residues 202–213 (LSLTPSHASMTK), 233–252 (SQLSSRATQGPSPSVSSSWT), and 259–271 (ISISGLLQRQCAG).

In terms of tissue distribution, specifically expressed in meiocytes of the gonads.

It localises to the nucleus. It is found in the chromosome. It participates in protein modification; protein sumoylation. SUMO E3 ligase that acts as a regulator of crossing-over during meiosis: required to couple chromosome synapsis to the formation of crossover-specific recombination complexes. Localizes to recombination sites and stabilizes meiosis-specific recombination factors, such as MutS-gamma complex proteins (MSH4 and MSH5) and TEX11. May mediate sumoylation of target proteins MSH4 and/or MSH5, leading to enhance their binding to recombination sites. Acts as a limiting factor for crossover designation and/or reinforcement and plays an antagonist role with CCNB1IP1/HEI10 in the regulation of meiotic recombination. The protein is Probable E3 SUMO-protein ligase RNF212 (Rnf212) of Mus musculus (Mouse).